The following is a 230-amino-acid chain: 3,4-dihydroxy-2-butanone 4-phosphate synthase (230 aa).

Residues 38–39, aspartate 43, 151–155, and glutamate 175 contribute to the D-ribulose 5-phosphate site; these read RE and RRGHT. Mg(2+) is bound at residue glutamate 39. Histidine 154 contributes to the Mg(2+) binding site.

This sequence belongs to the DHBP synthase family. Homodimer. The cofactor is Mg(2+). Requires Mn(2+) as cofactor.

It catalyses the reaction D-ribulose 5-phosphate = (2S)-2-hydroxy-3-oxobutyl phosphate + formate + H(+). The protein operates within cofactor biosynthesis; riboflavin biosynthesis; 2-hydroxy-3-oxobutyl phosphate from D-ribulose 5-phosphate: step 1/1. In terms of biological role, catalyzes the conversion of D-ribulose 5-phosphate to formate and 3,4-dihydroxy-2-butanone 4-phosphate. The sequence is that of 3,4-dihydroxy-2-butanone 4-phosphate synthase from Vibrio harveyi (Beneckea harveyi).